Consider the following 222-residue polypeptide: LexA repressor (222 aa).

Positions 28–48 form a DNA-binding region, H-T-H motif; sequence IREIGEHMDIRSTNGVNDHLK. Residues Ser-135 and Lys-172 each act as for autocatalytic cleavage activity in the active site.

The protein belongs to the peptidase S24 family. As to quaternary structure, homodimer.

It catalyses the reaction Hydrolysis of Ala-|-Gly bond in repressor LexA.. Represses a number of genes involved in the response to DNA damage (SOS response), including recA and lexA. In the presence of single-stranded DNA, RecA interacts with LexA causing an autocatalytic cleavage which disrupts the DNA-binding part of LexA, leading to derepression of the SOS regulon and eventually DNA repair. The polypeptide is LexA repressor (Myxococcus xanthus (strain DK1622)).